A 265-amino-acid chain; its full sequence is Exosome complex component Rrp4 (265 aa).

One can recognise an S1 motif domain in the interval 65 to 137 (GDNVIGKIVD…EVNNIDLTTK (73 aa)). The 59-residue stretch at 147–205 (KGGQIVKITPSRVPRVIGRGGSMINMIKKLTMTRIIVGQNGWIWVSGKNDALEKLAIEA) folds into the KH domain. A disordered region spans residues 241 to 265 (EIPKLEEEPQGEDEVNGNDGEARGA).

It belongs to the RRP4 family. As to quaternary structure, component of the archaeal exosome complex. Forms a trimer of Rrp4 and/or Csl4 subunits. The trimer associates with a hexameric ring-like arrangement composed of 3 Rrp41-Rrp42 heterodimers.

It localises to the cytoplasm. Functionally, non-catalytic component of the exosome, which is a complex involved in RNA degradation. Increases the RNA binding and the efficiency of RNA degradation. Confers strong poly(A) specificity to the exosome. This chain is Exosome complex component Rrp4, found in Pyrococcus abyssi (strain GE5 / Orsay).